The following is a 224-amino-acid chain: Putative adhesin A1G_07050 (224 aa).

A signal peptide spans 1–22 (MKKLLLIAATSATILSSSVSFA).

This is Putative adhesin A1G_07050 from Rickettsia rickettsii (strain Sheila Smith).